A 189-amino-acid polypeptide reads, in one-letter code: GTPase KRas (189 aa).

M1 bears the N-acetylmethionine; in GTPase KRas; alternate mark. At T2 the chain carries N-acetylthreonine; in GTPase KRas, N-terminally processed. Residues 10–18, 29–35, and 59–60 contribute to the GTP site; these read GAGGVGKSA, VDEYDPT, and AG. The Effector region motif lies at 32–40; it reads YDPTIEDSY. (Microbial infection) O-linked (Glc) threonine; by P.sordellii toxin TcsL glycosylation occurs at T35. N6-acetyllysine is present on K104. 116-119 is a binding site for GTP; that stretch reads NKCD. A hypervariable region region spans residues 166-185; sequence YRLKKISKEEKTPGCVKIKK. K170 participates in a covalent cross-link: Glycyl lysine isopeptide (Lys-Gly) (interchain with G-Cter in ubiquitin). A lipid anchor (S-palmitoyl cysteine) is attached at C180. N6-palmitoyl lysine attachment occurs at residues K182, K184, and K185. The residue at position 186 (C186) is a Cysteine methyl ester. Residue C186 is the site of S-farnesyl cysteine attachment. The propeptide at 187-189 is removed in mature form; that stretch reads IIM.

This sequence belongs to the small GTPase superfamily. Ras family. As to quaternary structure, interacts with PHLPP. Interacts (active GTP-bound form preferentially) with RGS14. Interacts (when farnesylated) with PDE6D; this promotes dissociation from the cell membrane. Interacts with SOS1. Interacts (when farnesylated) with GPR31. Interacts with RAP1GDS1. Interacts (active GTP-bound form) with both SHOC2 and PP1c (all isoforms) to form a tertiary complex; SHOC2 and PP1c preferably bind M-Ras/MRAS, but they also bind K-Ras/KRAS, N-Ras/NRAS and H-Ras/HRAS. Interacts (GTP-bound form) with MAPKAP1/SIN1; inhibiting K-Ras/KRAS activity. Interacts with GPR31; in a farnelysation-dependent manner. Post-translationally, acetylation at Lys-104 prevents interaction with guanine nucleotide exchange factors (GEFs). Palmitoylated at Lys-182, Lys-184 and Lys-185. Palmitoylation on lysine residues is promoted by palmitoylation at Cys-180. Lysine-depalmitoylation by SIRT2 promotes its localization to endomembranes in endocytic pathways. In terms of processing, ubiquitinated by the BCR(LZTR1) E3 ubiquitin ligase complex at Lys-170 in a non-degradative manner, leading to inhibit Ras signaling by decreasing Ras association with membranes. Post-translationally, (Microbial infection) Glucosylated at Thr-35 by P.sordellii toxin TcsL.

Its subcellular location is the cell membrane. The protein localises to the endomembrane system. It is found in the cytoplasm. It localises to the cytosol. The enzyme catalyses GTP + H2O = GDP + phosphate + H(+). With respect to regulation, alternates between an inactive form bound to GDP and an active form bound to GTP. Activated by a guanine nucleotide-exchange factor (GEF) and inactivated by a GTPase-activating protein (GAP). Interaction with SOS1 promotes exchange of bound GDP to GTP. Ras proteins bind GDP/GTP and possess intrinsic GTPase activity. Plays an important role in the regulation of cell proliferation. Plays a role in promoting oncogenic events by inducing transcriptional silencing of tumor suppressor genes (TSGs) in colorectal cancer (CRC) cells in a ZNF304-dependent manner. This is GTPase KRas (KRAS) from Homo sapiens (Human).